Here is a 452-residue protein sequence, read N- to C-terminus: UDP-N-acetylmuramoylalanine--D-glutamate ligase (452 aa).

119 to 125 contributes to the ATP binding site; the sequence is GSNGKTT.

The protein belongs to the MurCDEF family.

It localises to the cytoplasm. It carries out the reaction UDP-N-acetyl-alpha-D-muramoyl-L-alanine + D-glutamate + ATP = UDP-N-acetyl-alpha-D-muramoyl-L-alanyl-D-glutamate + ADP + phosphate + H(+). The protein operates within cell wall biogenesis; peptidoglycan biosynthesis. Functionally, cell wall formation. Catalyzes the addition of glutamate to the nucleotide precursor UDP-N-acetylmuramoyl-L-alanine (UMA). The sequence is that of UDP-N-acetylmuramoylalanine--D-glutamate ligase from Streptococcus pyogenes serotype M6 (strain ATCC BAA-946 / MGAS10394).